The chain runs to 411 residues: MMP alpha-(1-&gt;4)-mannosyltransferase (411 aa).

It belongs to the glycosyltransferase group 1 family. Glycosyltransferase 4 subfamily.

It catalyses the reaction [3-O-methyl-alpha-D-mannosyl-(1-&gt;4)](n)-3-O-methyl-D-mannose + GDP-alpha-D-mannose = alpha-D-mannosyl-(1-&gt;4)-[3-O-methyl-alpha-D-mannosyl-(1-&gt;4)](n)-3-O-methyl-D-mannose + GDP + H(+). The enzyme catalyses [3-O-methyl-alpha-D-mannosyl-(1-&gt;4)](n)-1-O,3-O-dimethyl-alpha-D-mannose + GDP-alpha-D-mannose = alpha-D-mannosyl-(1-&gt;4)-[3-O-methyl-alpha-D-mannosyl-(1-&gt;4)](n)-1-O,3-O-dimethyl-alpha-D-mannose + GDP + H(+). Its activity is regulated as follows. Activity is significantly enhanced in the presence of Mg(2+). Functionally, glycosyltransferase involved in the biosynthesis of 3-O-methylmannose polysaccharides (MMP), which are intracellular polymethylated polysaccharides implicated in the modulation of fatty acid metabolism in non-tuberculous mycobacteria. Highly specific alpha-(1-&gt;4)-mannosyltransferase that can transfer mannose units from GDP-mannose to a wide range of alpha-(1-&gt;4) oligomannosides longer than three mannoses, including all hydrolytic products of MmpH. Can use synthetic trimannosides and tetramannosides as substrates, but not mono- and disaccharides, and is significantly more active with the methylated substrates, preferring the tetramannosides over the trimannosides. In Mycolicibacterium hassiacum (strain DSM 44199 / CIP 105218 / JCM 12690 / 3849) (Mycobacterium hassiacum), this protein is MMP alpha-(1-&gt;4)-mannosyltransferase.